The following is a 384-amino-acid chain: Farnesyl pyrophosphate synthase 1, mitochondrial (384 aa).

Isopentenyl diphosphate is bound by residues Lys-89, Arg-92, and Gln-128. The Mg(2+) site is built by Asp-135 and Asp-139. Residue Arg-144 coordinates dimethylallyl diphosphate. Arg-145 is an isopentenyl diphosphate binding site. Dimethylallyl diphosphate is bound by residues Lys-232, Thr-233, Gln-271, Lys-288, and Lys-297.

This sequence belongs to the FPP/GGPP synthase family. Mg(2+) is required as a cofactor. In terms of tissue distribution, the FPS1L mRNA accumulates preferentially in inflorescences, whereas the FPS1S mRNA is predominantly expressed in roots and inflorescences.

It localises to the mitochondrion. The protein resides in the cytoplasm. The enzyme catalyses isopentenyl diphosphate + dimethylallyl diphosphate = (2E)-geranyl diphosphate + diphosphate. It catalyses the reaction isopentenyl diphosphate + (2E)-geranyl diphosphate = (2E,6E)-farnesyl diphosphate + diphosphate. The protein operates within isoprenoid biosynthesis; farnesyl diphosphate biosynthesis; farnesyl diphosphate from geranyl diphosphate and isopentenyl diphosphate: step 1/1. It participates in isoprenoid biosynthesis; geranyl diphosphate biosynthesis; geranyl diphosphate from dimethylallyl diphosphate and isopentenyl diphosphate: step 1/1. In terms of biological role, catalyzes the sequential condensation of isopentenyl pyrophosphate with the allylic pyrophosphates, dimethylallyl pyrophosphate, and then with the resultant geranylpyrophosphate to the ultimate product farnesyl pyrophosphate. This chain is Farnesyl pyrophosphate synthase 1, mitochondrial (FPS1), found in Arabidopsis thaliana (Mouse-ear cress).